A 228-amino-acid polypeptide reads, in one-letter code: Ephrin-A5 (228 aa).

The signal sequence occupies residues 1 to 20; sequence MLHVEMLTLLFLVLWMCVFS. Residues 29–162 enclose the Ephrin RBD domain; sequence ADRYAVYWNS…KLKVFVRPTN (134 aa). The N-linked (GlcNAc...) asparagine glycan is linked to Asn-37. 2 disulfides stabilise this stretch: Cys-62–Cys-102 and Cys-90–Cys-151. Asn-162 carries N-linked (GlcNAc...) asparagine; atypical glycosylation. A disordered region spans residues 186-205; sequence EPADDTVHESAEPSRGENAA. Positions 190 to 200 are enriched in basic and acidic residues; it reads DTVHESAEPSR. Residue Asn-203 is the site of GPI-anchor amidated asparagine attachment. The propeptide at 204 to 228 is removed in mature form; that stretch reads AAQTPRIPSRLLAILLFLLAMLLTL.

The protein belongs to the ephrin family. As to quaternary structure, binds to the receptor tyrosine kinases EPHA2, EPHA3 and EPHB1. Forms a ternary EFNA5-EPHA3-ADAM10 complex mediating EFNA5 extracellular domain shedding by ADAM10 which regulates the EFNA5-EPHA3 complex internalization and function. Binds to EPHB2. Interacts with EPHA8; activates EPHA8. Expressed in myogenic progenitor cells.

It is found in the cell membrane. It localises to the membrane. The protein resides in the caveola. Its function is as follows. Cell surface GPI-bound ligand for Eph receptors, a family of receptor tyrosine kinases which are crucial for migration, repulsion and adhesion during neuronal, vascular and epithelial development. Binds promiscuously Eph receptors residing on adjacent cells, leading to contact-dependent bidirectional signaling into neighboring cells. The signaling pathway downstream of the receptor is referred to as forward signaling while the signaling pathway downstream of the ephrin ligand is referred to as reverse signaling. Induces compartmentalized signaling within a caveolae-like membrane microdomain when bound to the extracellular domain of its cognate receptor. This signaling event requires the activity of the Fyn tyrosine kinase. Activates the EPHA3 receptor to regulate cell-cell adhesion and cytoskeletal organization. With the receptor EPHA2 may regulate lens fiber cells shape and interactions and be important for lens transparency maintenance. May function actively to stimulate axon fasciculation. The interaction of EFNA5 with EPHA5 also mediates communication between pancreatic islet cells to regulate glucose-stimulated insulin secretion. Cognate/functional ligand for EPHA7, their interaction regulates brain development modulating cell-cell adhesion and repulsion. This is Ephrin-A5 (Efna5) from Mus musculus (Mouse).